A 471-amino-acid chain; its full sequence is Vitellogenic carboxypeptidase (471 aa).

The signal sequence occupies residues Met1–Asp19. The N-linked (GlcNAc...) asparagine glycan is linked to Asn135. Active-site residues include Ser207, Asp391, and His448.

Belongs to the peptidase S10 family. Synthesized in the fat body of vitellogenic females, secreted into the hemolymph and accumulates in yolk bodies of developing oocytes.

It localises to the secreted. In terms of biological role, may play a role in activating hydrolytic enzymes that are involved in the degradation of yolk proteins in developing embryos or may function as an exopeptidase in the degradation of vitellogenin. The polypeptide is Vitellogenic carboxypeptidase (VCP) (Aedes aegypti (Yellowfever mosquito)).